Consider the following 356-residue polypeptide: Histidinol-phosphate aminotransferase (356 aa).

N6-(pyridoxal phosphate)lysine is present on Lys-214.

The protein belongs to the class-II pyridoxal-phosphate-dependent aminotransferase family. Histidinol-phosphate aminotransferase subfamily. Homodimer. The cofactor is pyridoxal 5'-phosphate.

The enzyme catalyses L-histidinol phosphate + 2-oxoglutarate = 3-(imidazol-4-yl)-2-oxopropyl phosphate + L-glutamate. Its pathway is amino-acid biosynthesis; L-histidine biosynthesis; L-histidine from 5-phospho-alpha-D-ribose 1-diphosphate: step 7/9. This Escherichia coli O45:K1 (strain S88 / ExPEC) protein is Histidinol-phosphate aminotransferase.